Here is a 193-residue protein sequence, read N- to C-terminus: GDP-mannose pyrophosphatase (193 aa).

GDP-alpha-D-mannose-binding positions include 38 to 40 (IRE), Arg67, and 85 to 87 (AGL). The Nudix hydrolase domain occupies 43–180 (DRGDGATILL…RIKDGKTIML (138 aa)). 3 residues coordinate Mg(2+): Ala85, Glu100, and Glu104. A Nudix box motif is present at residues 86-106 (GLLDDYSPEECIRNEAIEETG). Residues Glu104, Glu127, 150–151 (DE), and Lys176 each bind GDP-alpha-D-mannose. Glu151 contributes to the Mg(2+) binding site.

It belongs to the Nudix hydrolase family. NudK subfamily. Homodimer. Mg(2+) is required as a cofactor.

It catalyses the reaction GDP-alpha-D-mannose + H2O = alpha-D-mannose 1-phosphate + GMP + 2 H(+). Nucleoside diphosphate sugar hydrolase that hydrolyzes GDP-mannose as its preferred substrate, yielding GMP and mannose-1-phosphate. This chain is GDP-mannose pyrophosphatase (nudK), found in Pectobacterium atrosepticum (strain SCRI 1043 / ATCC BAA-672) (Erwinia carotovora subsp. atroseptica).